Consider the following 881-residue polypeptide: Serine/threonine-protein kinase/endoribonuclease IRE1b (881 aa).

The first 21 residues, 1 to 21, serve as a signal peptide directing secretion; that stretch reads MRGSALLDLILFLLVSPLAHS. Over 22–357 the chain is Lumenal; sequence FKGSEISKFY…KQAGFASKFS (336 aa). N-linked (GlcNAc...) asparagine glycosylation occurs at Asn115. A helical membrane pass occupies residues 358 to 378; it reads GLIVLIFGFCVTMLSVCGLFF. The Cytoplasmic portion of the chain corresponds to 379-881; that stretch reads YRLRQSIRIK…FFKYSKTTVF (503 aa). Positions 459–744 constitute a Protein kinase domain; it reads FVSNKEIAKG…AQDVMHHPLF (286 aa). ATP is bound by residues 465–473 and Lys487; that span reads IAKGSNGTV. The tract at residues 481-502 is ATP selon article; it reads GRLVAVKRLVQSHHDVAQKEIL. Asp608 (proton acceptor) is an active-site residue. Positions 642 to 661 are disordered; that stretch reads LTRNSTGLGSGSSGWQAPEQ. The KEN domain occupies 747-878; sequence SDMRLSFLRD…EEFFFKYSKT (132 aa).

This sequence belongs to the protein kinase superfamily. Ser/Thr protein kinase family. In terms of assembly, homodimer; disulfide-linked. Dimer formation is driven by hydrophobic interactions within the N-terminal luminal domains and stabilized by disulfide bridges. Requires Mg(2+) as cofactor. Post-translationally, autophosphorylated. Ubiquitous. Detected in the apical meristem, at leaf margins where vascular bundles end, in the anthers before pollen is formed and in the ovules at a very early stage of development. There is no expression in more mature embryos. Also strongly expressed in the cotyledons immediately after germination but not later on.

It is found in the endoplasmic reticulum membrane. It catalyses the reaction L-seryl-[protein] + ATP = O-phospho-L-seryl-[protein] + ADP + H(+). The catalysed reaction is L-threonyl-[protein] + ATP = O-phospho-L-threonyl-[protein] + ADP + H(+). The kinase domain is activated by trans-autophosphorylation. Kinase activity is required for activation of the endoribonuclease domain. Its function is as follows. Senses unfolded proteins in the lumen of the endoplasmic reticulum via its N-terminal domain which leads to enzyme auto-activation. The active endoribonuclease domain splices bZIP60 mRNA to generate a new C-terminus, converting it into a potent unfolded-protein response transcriptional activator which then induces transcription of UPR target genes. Involved in organ growth regulation. Plays a role in plant immunity and abiotic stress responses. Required for ER stress-induced autophagy. In Arabidopsis thaliana (Mouse-ear cress), this protein is Serine/threonine-protein kinase/endoribonuclease IRE1b (IRE1B).